Here is a 253-residue protein sequence, read N- to C-terminus: Imidazole glycerol phosphate synthase subunit HisF (253 aa).

Catalysis depends on residues Asp11 and Asp130.

The protein belongs to the HisA/HisF family. In terms of assembly, heterodimer of HisH and HisF.

The protein resides in the cytoplasm. The enzyme catalyses 5-[(5-phospho-1-deoxy-D-ribulos-1-ylimino)methylamino]-1-(5-phospho-beta-D-ribosyl)imidazole-4-carboxamide + L-glutamine = D-erythro-1-(imidazol-4-yl)glycerol 3-phosphate + 5-amino-1-(5-phospho-beta-D-ribosyl)imidazole-4-carboxamide + L-glutamate + H(+). The protein operates within amino-acid biosynthesis; L-histidine biosynthesis; L-histidine from 5-phospho-alpha-D-ribose 1-diphosphate: step 5/9. IGPS catalyzes the conversion of PRFAR and glutamine to IGP, AICAR and glutamate. The HisF subunit catalyzes the cyclization activity that produces IGP and AICAR from PRFAR using the ammonia provided by the HisH subunit. This chain is Imidazole glycerol phosphate synthase subunit HisF, found in Clostridium botulinum (strain Okra / Type B1).